A 139-amino-acid chain; its full sequence is ATP synthase epsilon chain (139 aa).

The protein belongs to the ATPase epsilon chain family. In terms of assembly, F-type ATPases have 2 components, CF(1) - the catalytic core - and CF(0) - the membrane proton channel. CF(1) has five subunits: alpha(3), beta(3), gamma(1), delta(1), epsilon(1). CF(0) has three main subunits: a, b and c.

It is found in the cell inner membrane. In terms of biological role, produces ATP from ADP in the presence of a proton gradient across the membrane. This chain is ATP synthase epsilon chain (atpC), found in Escherichia coli O157:H7.